The chain runs to 243 residues: MTFYSVRMRASLQGQHISGAETLVSCPTDVPRLTAQFVERAMNHAKGVPDAITTKIESIPESDIQRVPRLLTREYQARDCHDAHGFVQQQLTTVCSAEVAQKAVDLLLTIRNMRGAILLDAHSARRLEPDHNRGIRASNFGDASSISAKPDNKEIGISKNHYHEALILSSKVMSAPGIIAEICISDDPDYTTGYVSLNGVYTRVHTMKRLGSPLGGRVFILDSEKASVATAINHIENTPVLIL.

Belongs to the BioW family. As to quaternary structure, homodimer. Mg(2+) is required as a cofactor.

The enzyme catalyses heptanedioate + ATP + CoA = 6-carboxyhexanoyl-CoA + AMP + diphosphate. It functions in the pathway metabolic intermediate metabolism; pimeloyl-CoA biosynthesis; pimeloyl-CoA from pimelate: step 1/1. Its function is as follows. Catalyzes the transformation of pimelate into pimeloyl-CoA with concomitant hydrolysis of ATP to AMP. This is 6-carboxyhexanoate--CoA ligase from Corynebacterium pseudotuberculosis (strain FRC41).